Reading from the N-terminus, the 180-residue chain is Large ribosomal subunit protein uL5 (180 aa).

This sequence belongs to the universal ribosomal protein uL5 family. Part of the 50S ribosomal subunit; part of the 5S rRNA/L5/L18/L25 subcomplex. Contacts the 5S rRNA and the P site tRNA. Forms a bridge to the 30S subunit in the 70S ribosome.

In terms of biological role, this is one of the proteins that bind and probably mediate the attachment of the 5S RNA into the large ribosomal subunit, where it forms part of the central protuberance. In the 70S ribosome it contacts protein S13 of the 30S subunit (bridge B1b), connecting the 2 subunits; this bridge is implicated in subunit movement. Contacts the P site tRNA; the 5S rRNA and some of its associated proteins might help stabilize positioning of ribosome-bound tRNAs. This is Large ribosomal subunit protein uL5 from Ligilactobacillus salivarius (strain UCC118) (Lactobacillus salivarius).